We begin with the raw amino-acid sequence, 382 residues long: 3-ketosteroid-9-alpha-monooxygenase, oxygenase component (382 aa).

The Rieske domain occupies Trp-20–Val-122. [2Fe-2S] cluster-binding residues include Cys-61, His-63, Cys-80, and His-83. The Fe cation site is built by Asn-169, His-175, His-180, and Asp-298.

In terms of assembly, homotrimer. The two-component system 3-ketosteroid-9-alpha-monooxygenase is composed of an oxygenase component KshA and a reductase component KshB. Requires [2Fe-2S] cluster as cofactor. It depends on Fe cation as a cofactor.

The catalysed reaction is androsta-1,4-diene-3,17-dione + 2 reduced [2Fe-2S]-[ferredoxin] + O2 + 2 H(+) = 9alpha-hydroxyandrosta-1,4-diene-3,17-dione + 2 oxidized [2Fe-2S]-[ferredoxin] + H2O. In terms of biological role, in vitro, catalyzes the introduction of a 9alpha-hydroxyl moiety into the ring B of 3-ketosteroid substrates such as 1,4-androstadiene-3,17-dione (ADD), 4-androstene-3,17-dione (AD), 4-androstene-17beta-ol-3-one (testosterone), 4-pregnene-3,20-dione (progesterone), 23,24-bisnorcholesta-4-ene-22-oate and 23,24-bisnorcholesta-1,4-diene-22-oate. This chain is 3-ketosteroid-9-alpha-monooxygenase, oxygenase component, found in Rhodococcus rhodochrous.